Consider the following 200-residue polypeptide: Small ribosomal subunit protein uS4 (200 aa).

Residues 22–43 are disordered; the sequence is TGKELERRPYAPGQHGPTQRKK. In terms of domain architecture, S4 RNA-binding spans 92–170; the sequence is QRLDNIVYRL…VPEYVTFDAE (79 aa).

This sequence belongs to the universal ribosomal protein uS4 family. In terms of assembly, part of the 30S ribosomal subunit. Contacts protein S5. The interaction surface between S4 and S5 is involved in control of translational fidelity.

Its function is as follows. One of the primary rRNA binding proteins, it binds directly to 16S rRNA where it nucleates assembly of the body of the 30S subunit. Functionally, with S5 and S12 plays an important role in translational accuracy. In Listeria welshimeri serovar 6b (strain ATCC 35897 / DSM 20650 / CCUG 15529 / CIP 8149 / NCTC 11857 / SLCC 5334 / V8), this protein is Small ribosomal subunit protein uS4.